Here is a 180-residue protein sequence, read N- to C-terminus: Large ribosomal subunit protein uL6 (180 aa).

It belongs to the universal ribosomal protein uL6 family. In terms of assembly, part of the 50S ribosomal subunit.

In terms of biological role, this protein binds to the 23S rRNA, and is important in its secondary structure. It is located near the subunit interface in the base of the L7/L12 stalk, and near the tRNA binding site of the peptidyltransferase center. In Dictyoglomus turgidum (strain DSM 6724 / Z-1310), this protein is Large ribosomal subunit protein uL6.